Here is a 115-residue protein sequence, read N- to C-terminus: Small nuclear ribonucleoprotein Sm D2 (115 aa).

The Sm domain maps to 30–115 (LSVLQQAVKN…VVLVVRIPSA (86 aa)).

It belongs to the snRNP core protein family. In terms of assembly, belongs to the 40S cdc5-associated complex (or cwf complex), a spliceosome sub-complex reminiscent of a late-stage spliceosome composed of the U2, U5 and U6 snRNAs and at least brr2, cdc5, cwf2/prp3, cwf3/syf1, cwf4/syf3, cwf5/ecm2, spp42/cwf6, cwf7/spf27, cwf8, cwf9, cwf10, cwf11, cwf12, prp45/cwf13, cwf14, cwf15, cwf16, cwf17, cwf18, cwf19, cwf20, cwf21, cwf22, cwf23, cwf24, cwf25, cwf26, cyp7/cwf27, cwf28, cwf29/ist3, lea1, msl1, prp5/cwf1, prp10, prp12/sap130, prp17, prp22, sap61, sap62, sap114, sap145, slu7, smb1, smd1, smd3, smf1, smg1 and syf2.

The protein resides in the nucleus. Its subcellular location is the cytoplasm. The protein localises to the cytosol. Functionally, plays a role in pre-mRNA splicing as a core component of the spliceosomal U1, U2, U4 and U5 small nuclear ribonucleoproteins (snRNPs), the building blocks of the spliceosome. The sequence is that of Small nuclear ribonucleoprotein Sm D2 (smd2) from Schizosaccharomyces pombe (strain 972 / ATCC 24843) (Fission yeast).